Consider the following 345-residue polypeptide: NADPH dehydrogenase (345 aa).

23-26 serves as a coordination point for FMN; the sequence is SPMC. Tyr-28 is a binding site for substrate. Residues Ala-60 and Gln-102 each coordinate FMN. 164 to 167 serves as a coordination point for substrate; it reads HGAH. FMN contacts are provided by residues Arg-215 and 307-308; that span reads GR.

Belongs to the NADH:flavin oxidoreductase/NADH oxidase family. NamA subfamily. In terms of assembly, homotetramer. Requires FMN as cofactor.

The catalysed reaction is A + NADPH + H(+) = AH2 + NADP(+). Catalyzes the reduction of the double bond of an array of alpha,beta-unsaturated aldehydes and ketones. It also reduces the nitro group of nitroester and nitroaromatic compounds. It could have a role in detoxification processes. The chain is NADPH dehydrogenase from Bacillus cereus (strain ATCC 14579 / DSM 31 / CCUG 7414 / JCM 2152 / NBRC 15305 / NCIMB 9373 / NCTC 2599 / NRRL B-3711).